The following is a 313-amino-acid chain: MIHMRTGVIGVGHLGRFHAQKYAAISQLAGVFDENAERAAEVAAELRCRAFPSVDALLAEVDAVSIVTPTSTHFAVAEVAMQAGVHCLIEKPFTLDTEEADALIGMAQERHLVLAIGHIKRVHPAIQYLRQAGFGAPRYLEAERLAPFKPRSLDIDVIMDLMIHDLDLTLLLTGAEPVDVRAVGVAAVTDKADMATAWMTLNNGTVANLAASRVVREPARRMRIFWQDRYASVDFLNNTLHIYHRGAGTVPGIPGVRDEAVDLAKRDALAAEIEDFLNAIAAHRPVFCDGVAGRRVLAAALQVRVAVEAFLQR.

NAD(+) is bound by residues histidine 13, leucine 14, and arginine 38.

This sequence belongs to the Gfo/Idh/MocA family. Exists in multiple oligomeric states.

The catalysed reaction is UDP-N-acetyl-alpha-D-glucosamine + NAD(+) = UDP-2-acetamido-3-dehydro-2-deoxy-alpha-D-glucopyranose + NADH + H(+). It participates in bacterial outer membrane biogenesis; LPS lipid A biosynthesis. Functionally, oxidoreductase involved in the synthesis of 2,3-diamino-2,3-dideoxy-D-glucopyranose (GlcN3N), which is a component of lipid A in some species. Catalyzes the NAD(+)-dependent oxidation of the glucosamine 3-position of UDP-N-acetyl-glucosamine (UDP-GlcNAc) to a ketone moiety, forming UDP-2-acetamido-3-dehydro-2-deoxy-alpha-D-glucopyranose (UDP-3-oxo-GlcNAc). Is specific for UDP-GlcNAc, no activity is observed with UDP-glucose (UDP-Glc), UDP-glucoronic acid (UDP-GlcA), UDP-galactose (UDP-Gal) and UDP-N-acetylgalactosamine (UDP-GalNAc). Cannot use FAD(+) and NADP(+). The sequence is that of UDP-N-acetylglucosamine 3-dehydrogenase from Acidithiobacillus ferrooxidans (strain ATCC 23270 / DSM 14882 / CIP 104768 / NCIMB 8455) (Ferrobacillus ferrooxidans (strain ATCC 23270)).